Reading from the N-terminus, the 629-residue chain is tRNA uridine 5-carboxymethylaminomethyl modification enzyme MnmG (629 aa).

Residues 13 to 18 (GGGHAG), Val-125, and Ser-180 each bind FAD. 273–287 (GPRYCPSIEDKVMRF) provides a ligand contact to NAD(+). Gln-370 contacts FAD.

This sequence belongs to the MnmG family. Homodimer. Heterotetramer of two MnmE and two MnmG subunits. Requires FAD as cofactor.

The protein resides in the cytoplasm. Functionally, NAD-binding protein involved in the addition of a carboxymethylaminomethyl (cmnm) group at the wobble position (U34) of certain tRNAs, forming tRNA-cmnm(5)s(2)U34. The polypeptide is tRNA uridine 5-carboxymethylaminomethyl modification enzyme MnmG (Sodalis glossinidius (strain morsitans)).